The chain runs to 139 residues: Peptide methionine sulfoxide reductase MsrB (139 aa).

One can recognise a MsrB domain in the interval 14-137 (DEEWRRELTP…NSISLDFQPE (124 aa)). Residues C53, C56, C102, and C105 each contribute to the Zn(2+) site. C126 functions as the Nucleophile in the catalytic mechanism.

It belongs to the MsrB Met sulfoxide reductase family. It depends on Zn(2+) as a cofactor.

It catalyses the reaction L-methionyl-[protein] + [thioredoxin]-disulfide + H2O = L-methionyl-(R)-S-oxide-[protein] + [thioredoxin]-dithiol. This is Peptide methionine sulfoxide reductase MsrB from Leifsonia xyli subsp. xyli (strain CTCB07).